Here is a 350-residue protein sequence, read N- to C-terminus: 3-isopropylmalate dehydrogenase (350 aa).

76–87 serves as a coordination point for NAD(+); the sequence is GPKWDNAPKRPE. Residues R94, R104, R132, and D217 each contribute to the substrate site. Residues D217, D241, and D245 each contribute to the Mg(2+) site. 275 to 287 is an NAD(+) binding site; that stretch reads GSAPDIANQNIAN.

This sequence belongs to the isocitrate and isopropylmalate dehydrogenases family. LeuB type 1 subfamily. As to quaternary structure, homodimer. Mg(2+) serves as cofactor. The cofactor is Mn(2+).

The protein resides in the cytoplasm. It carries out the reaction (2R,3S)-3-isopropylmalate + NAD(+) = 4-methyl-2-oxopentanoate + CO2 + NADH. It participates in amino-acid biosynthesis; L-leucine biosynthesis; L-leucine from 3-methyl-2-oxobutanoate: step 3/4. Catalyzes the oxidation of 3-carboxy-2-hydroxy-4-methylpentanoate (3-isopropylmalate) to 3-carboxy-4-methyl-2-oxopentanoate. The product decarboxylates to 4-methyl-2 oxopentanoate. The sequence is that of 3-isopropylmalate dehydrogenase from Listeria monocytogenes serovar 1/2a (strain ATCC BAA-679 / EGD-e).